An 88-amino-acid chain; its full sequence is LYR motif-containing protein 2 (88 aa).

Residues 1 to 19 constitute a mitochondrion transit peptide; that stretch reads MAASRLPPAALTLKQFMRR.

Belongs to the complex I LYR family.

It is found in the mitochondrion. Involved in efficient integration of the N-module into mitochondrial respiratory chain complex I. This is LYR motif-containing protein 2 (Lyrm2) from Mus musculus (Mouse).